Reading from the N-terminus, the 550-residue chain is CTP synthase (550 aa).

Residues Met1–Leu270 form an amidoligase domain region. CTP is bound at residue Ser13. Residue Ser13 coordinates UTP. ATP is bound by residues Ser14–Ile19 and Asp71. Residues Asp71 and Glu144 each contribute to the Mg(2+) site. CTP contacts are provided by residues Asp151–Glu153, Lys191–Gln196, and Lys227. Residues Lys191–Gln196 and Lys227 contribute to the UTP site. A Glutamine amidotransferase type-1 domain is found at Thr295 to Ala547. Gly356 contributes to the L-glutamine binding site. The Nucleophile; for glutamine hydrolysis role is filled by Cys383. L-glutamine contacts are provided by residues Leu384–Gln387, Glu407, and Arg473. Residues His520 and Glu522 contribute to the active site.

Belongs to the CTP synthase family. In terms of assembly, homotetramer.

It catalyses the reaction UTP + L-glutamine + ATP + H2O = CTP + L-glutamate + ADP + phosphate + 2 H(+). The enzyme catalyses L-glutamine + H2O = L-glutamate + NH4(+). It carries out the reaction UTP + NH4(+) + ATP = CTP + ADP + phosphate + 2 H(+). It participates in pyrimidine metabolism; CTP biosynthesis via de novo pathway; CTP from UDP: step 2/2. With respect to regulation, allosterically activated by GTP, when glutamine is the substrate; GTP has no effect on the reaction when ammonia is the substrate. The allosteric effector GTP functions by stabilizing the protein conformation that binds the tetrahedral intermediate(s) formed during glutamine hydrolysis. Inhibited by the product CTP, via allosteric rather than competitive inhibition. In terms of biological role, catalyzes the ATP-dependent amination of UTP to CTP with either L-glutamine or ammonia as the source of nitrogen. Regulates intracellular CTP levels through interactions with the four ribonucleotide triphosphates. The chain is CTP synthase from Burkholderia lata (strain ATCC 17760 / DSM 23089 / LMG 22485 / NCIMB 9086 / R18194 / 383).